Here is a 211-residue protein sequence, read N- to C-terminus: Thiamine-phosphate synthase (211 aa).

Residues 40-42 and N72 contribute to the 4-amino-2-methyl-5-(diphosphooxymethyl)pyrimidine site; that span reads QLR. D73 and D92 together coordinate Mg(2+). S111 is a binding site for 4-amino-2-methyl-5-(diphosphooxymethyl)pyrimidine. Residue 136–138 coordinates 2-[(2R,5Z)-2-carboxy-4-methylthiazol-5(2H)-ylidene]ethyl phosphate; it reads TST. K139 contributes to the 4-amino-2-methyl-5-(diphosphooxymethyl)pyrimidine binding site. 2-[(2R,5Z)-2-carboxy-4-methylthiazol-5(2H)-ylidene]ethyl phosphate is bound by residues G167 and 187-188; that span reads VS.

It belongs to the thiamine-phosphate synthase family. The cofactor is Mg(2+).

It catalyses the reaction 2-[(2R,5Z)-2-carboxy-4-methylthiazol-5(2H)-ylidene]ethyl phosphate + 4-amino-2-methyl-5-(diphosphooxymethyl)pyrimidine + 2 H(+) = thiamine phosphate + CO2 + diphosphate. It carries out the reaction 2-(2-carboxy-4-methylthiazol-5-yl)ethyl phosphate + 4-amino-2-methyl-5-(diphosphooxymethyl)pyrimidine + 2 H(+) = thiamine phosphate + CO2 + diphosphate. The enzyme catalyses 4-methyl-5-(2-phosphooxyethyl)-thiazole + 4-amino-2-methyl-5-(diphosphooxymethyl)pyrimidine + H(+) = thiamine phosphate + diphosphate. The protein operates within cofactor biosynthesis; thiamine diphosphate biosynthesis; thiamine phosphate from 4-amino-2-methyl-5-diphosphomethylpyrimidine and 4-methyl-5-(2-phosphoethyl)-thiazole: step 1/1. In terms of biological role, condenses 4-methyl-5-(beta-hydroxyethyl)thiazole monophosphate (THZ-P) and 2-methyl-4-amino-5-hydroxymethyl pyrimidine pyrophosphate (HMP-PP) to form thiamine monophosphate (TMP). This chain is Thiamine-phosphate synthase, found in Laribacter hongkongensis (strain HLHK9).